Reading from the N-terminus, the 70-residue chain is Sec-independent protein translocase protein TatA (70 aa).

A helical transmembrane segment spans residues methionine 1–glycine 21. The interval aspartate 46–serine 70 is disordered.

The protein belongs to the TatA/E family. The Tat system comprises two distinct complexes: a TatABC complex, containing multiple copies of TatA, TatB and TatC subunits, and a separate TatA complex, containing only TatA subunits. Substrates initially bind to the TatABC complex, which probably triggers association of the separate TatA complex to form the active translocon.

It is found in the cell inner membrane. Functionally, part of the twin-arginine translocation (Tat) system that transports large folded proteins containing a characteristic twin-arginine motif in their signal peptide across membranes. TatA could form the protein-conducting channel of the Tat system. In Thiobacillus denitrificans (strain ATCC 25259 / T1), this protein is Sec-independent protein translocase protein TatA.